A 112-amino-acid chain; its full sequence is Iron-sulfur cluster assembly protein CyaY (112 aa).

Belongs to the frataxin family.

In terms of biological role, involved in iron-sulfur (Fe-S) cluster assembly. May act as a regulator of Fe-S biogenesis. This Herminiimonas arsenicoxydans protein is Iron-sulfur cluster assembly protein CyaY.